The sequence spans 55 residues: Spermatid nuclear transition protein 1 (55 aa).

The span at 1-42 (MSTSRKLKSHGMRRGKNRAPHKGVKRGGSKRKYRKGSLKSRK) shows a compositional bias: basic residues. The interval 1-55 (MSTSRKLKSHGMRRGKNRAPHKGVKRGGSKRKYRKGSLKSRKRCDDANRNYRSHL) is disordered. Residues Ser-9, Ser-37, and Ser-40 each carry the phosphoserine modification.

This sequence belongs to the nuclear transition protein 1 family. As to expression, testis.

It is found in the nucleus. The protein localises to the chromosome. In terms of biological role, plays a key role in the replacement of histones to protamine in the elongating spermatids of mammals. In condensing spermatids, loaded onto the nucleosomes, where it promotes the recruitment and processing of protamines, which are responsible for histone eviction. This chain is Spermatid nuclear transition protein 1 (TNP1), found in Sus scrofa (Pig).